The primary structure comprises 100 residues: uncharacterized protein (100 aa).

This is an uncharacterized protein from Bacillus anthracis.